Here is a 600-residue protein sequence, read N- to C-terminus: MTIILHRSDFFEAILNHEGSSVAVVENESGASFCYSSLLNSVARAKEQLLAKTGKCDTSVSGERIAFLVESGYEYVVTLLTILACNAIAVPLAPSFPAPELRYIINNSEALALISSAKYVSKAEEVLAEGLDNTPLFCQLDGTRNISAIEEEVKLRDFSDEPRGGMMLFTSGTTARPKGVVLSQTNLTAQAKCLLEAWKYAPSDRLLHVLPLHHIHGTVNALLTPLLAGSSIEFMYPFNVNSVWTRLAAPFLENEQINGHSEKTNGAQKDETRVPISFFTAVPTIWSRMLKAHDSLSHDMQAAGKIAVSPNNLRLNISGSAALPKPIRDGWIQLTGGNVLLERYGMTEVGMALSCGLENTDRVDGSVGWPLPSVEARLMETDDETEIQRIIEHGAEIDAHSGKERIGEIQLRGPTVFTGYWRNPEATAKEFTTDGWFKTGDIAIRRQVPESGLGKSGSWAKGPAYFIQGRRSADIIKTGGEKVSALEVEREILALPEVDECAVVGLPSEAWGQKVAAVIVLSSKVGGSMSLQSLRSALKTRITAYKIPQDLEIVEFLPRNAMGKINKKELVKSVFGEVEKIRRRSIDLQTKRPVLNGQRG.

ATP is bound by residues Thr170–Thr174, His214, Ala321–Leu323, and Glu342–Arg343. An SBD1 region spans residues Asn241–Glu342. The segment at Arg343 to Tyr420 is SBD2. Residue Met346 coordinates substrate. The ATP site is built by Thr347, Asp441, Arg471, and Lys564. Oxalate is bound at residue Lys564.

It belongs to the ATP-dependent AMP-binding enzyme family.

In terms of biological role, coA ligase; part of the Fusarium detoxification of benzoxazolinone cluster 2 (FDB2) involved in the degradation of benzoxazolinones produced by the host plant. Maize, wheat, and rye produce the 2 benzoxazinone phytoanticipins 2,4-dihy-droxy-7-methoxy-1,4-benzoxazin-3-one (DIMBOA) and 2,4-dihydroxy-1,4-benzoxazin-3-one (DIBOA) that, due to their inherent instability once released, spontaneously degrade to the more stable corresponding benzoxazolinones, 6-methoxy-2-benzoxazolinone (MBOA) and 2-benzoxazolinone (BOA), respectively. The first step in the detoxification of benzoxazolinones involves the hydrolysis of the cyclic ester bond of benzoxazolinones by the FDB1 cluster gamma-lactamase MBL1 to aminophenols. MBL1 is able to convert BOA into 2-aminophenol (2-AP), as well as MBOA into 5-methoxy-2-aminophenol (2-AMP). The FDB2 cluster N-malonyltransferase FDB2/NAT1 then metabolizes aminophenols via N-malonylation to non-toxic malonamic acids. FDB2/NAT1 converts 2-AP into N-(2-hydroxyphenyl) malonamic acid (HPMA) and 2-AMP into N-(2-hydroxy-4-methoxyphenyl) malonamic acid (HMPMA). The duplicated dienlactone hydrolases DLH1 and DLH2 may provide redundant function for hydrolyzing the lactone moiety in the BOA molecule. The roles of the amidases an other enzymes encoded by the 2 FDB clusters have not been identified so far. This Gibberella moniliformis (strain M3125 / FGSC 7600) (Maize ear and stalk rot fungus) protein is CoA ligase FVEG_12633.